The chain runs to 278 residues: Urease accessory protein UreD (278 aa).

It belongs to the UreD family. As to quaternary structure, ureD, UreF and UreG form a complex that acts as a GTP-hydrolysis-dependent molecular chaperone, activating the urease apoprotein by helping to assemble the nickel containing metallocenter of UreC. The UreE protein probably delivers the nickel.

Its subcellular location is the cytoplasm. In terms of biological role, required for maturation of urease via the functional incorporation of the urease nickel metallocenter. The chain is Urease accessory protein UreD from Pseudomonas putida (strain ATCC 700007 / DSM 6899 / JCM 31910 / BCRC 17059 / LMG 24140 / F1).